The chain runs to 233 residues: 2,3,4,5-tetrahydropyridine-2,6-dicarboxylate N-acetyltransferase (233 aa).

Belongs to the transferase hexapeptide repeat family. DapH subfamily.

The enzyme catalyses (S)-2,3,4,5-tetrahydrodipicolinate + acetyl-CoA + H2O = L-2-acetamido-6-oxoheptanedioate + CoA. Its pathway is amino-acid biosynthesis; L-lysine biosynthesis via DAP pathway; LL-2,6-diaminopimelate from (S)-tetrahydrodipicolinate (acetylase route): step 1/3. In terms of biological role, catalyzes the transfer of an acetyl group from acetyl-CoA to tetrahydrodipicolinate. In Thermotoga sp. (strain RQ2), this protein is 2,3,4,5-tetrahydropyridine-2,6-dicarboxylate N-acetyltransferase.